Consider the following 284-residue polypeptide: Bifunctional protein FolD (284 aa).

Residues 166–168 and Ile232 contribute to the NADP(+) site; that span reads GAS.

The protein belongs to the tetrahydrofolate dehydrogenase/cyclohydrolase family. In terms of assembly, homodimer.

It catalyses the reaction (6R)-5,10-methylene-5,6,7,8-tetrahydrofolate + NADP(+) = (6R)-5,10-methenyltetrahydrofolate + NADPH. The catalysed reaction is (6R)-5,10-methenyltetrahydrofolate + H2O = (6R)-10-formyltetrahydrofolate + H(+). It participates in one-carbon metabolism; tetrahydrofolate interconversion. Its function is as follows. Catalyzes the oxidation of 5,10-methylenetetrahydrofolate to 5,10-methenyltetrahydrofolate and then the hydrolysis of 5,10-methenyltetrahydrofolate to 10-formyltetrahydrofolate. The chain is Bifunctional protein FolD from Azotobacter vinelandii (strain DJ / ATCC BAA-1303).